Reading from the N-terminus, the 402-residue chain is Candidapepsin-1 (402 aa).

The segment at residues 1–25 (MVAIVTLTRQVLLTIALALFAQGAA) is a signal peptide (or 18, or 21). The propeptide at 26–62 (IPEEAAKRDDNPGFVALDFDVLRKPLNLTEALLREKR) is activation peptide. Residue N52 is glycosylated (N-linked (GlcNAc...) asparagine). Positions 76 to 389 (YASKVSVGSN…NLDANTISIA (314 aa)) constitute a Peptidase A1 domain. The active site involves D94. C109 and C115 are disulfide-bonded. D282 is a catalytic residue. Cysteines 320 and 354 form a disulfide.

It belongs to the peptidase A1 family. In terms of processing, O-glycosylated.

It is found in the secreted. It catalyses the reaction Preferential cleavage at the carboxyl of hydrophobic amino acids, but fails to cleave 15-Leu-|-Tyr-16, 16-Tyr-|-Leu-17 and 24-Phe-|-Phe-25 of insulin B chain. Activates trypsinogen, and degrades keratin.. This is Candidapepsin-1 (SAPP1) from Candida parapsilosis (Yeast).